The chain runs to 414 residues: Probable elongation factor 1-gamma 1 (414 aa).

Positions Met1–Ser82 constitute a GST N-terminal domain. The 129-residue stretch at Ser87–Ile215 folds into the GST C-terminal domain. The span at Pro214 to Ala224 shows a compositional bias: low complexity. Positions Pro214–Leu260 are disordered. Residues Lys225 to Pro236 are compositionally biased toward basic and acidic residues. In terms of domain architecture, EF-1-gamma C-terminal spans Ala254 to Lys414.

In terms of assembly, EF-1 is composed of four subunits: alpha, beta, delta, and gamma.

Functionally, probably plays a role in anchoring the complex to other cellular components. The chain is Probable elongation factor 1-gamma 1 from Arabidopsis thaliana (Mouse-ear cress).